An 85-amino-acid chain; its full sequence is U4-theraphotoxin-Hhn1r (85 aa).

The N-terminal stretch at 1–22 (MKVTLIAILTCAAVLVLHTTAA) is a signal peptide. A propeptide spanning residues 23 to 48 (EELEAESQLMEVGMPDTELAAVDEER) is cleaved from the precursor. Intrachain disulfides connect cysteine 52–cysteine 66, cysteine 56–cysteine 77, and cysteine 71–cysteine 82.

Belongs to the neurotoxin 12 (Hwtx-2) family. 02 (Hwtx-2) subfamily. As to expression, expressed by the venom gland.

The protein resides in the secreted. Postsynaptic neurotoxin. The chain is U4-theraphotoxin-Hhn1r from Cyriopagopus hainanus (Chinese bird spider).